A 159-amino-acid chain; its full sequence is SsrA-binding protein (159 aa).

The segment at 133 to 159 is disordered; that stretch reads KKLHDKRETSKERDWNRQKNRLLKERG. Over residues 137–159 the composition is skewed to basic and acidic residues; the sequence is DKRETSKERDWNRQKNRLLKERG.

It belongs to the SmpB family.

It is found in the cytoplasm. Required for rescue of stalled ribosomes mediated by trans-translation. Binds to transfer-messenger RNA (tmRNA), required for stable association of tmRNA with ribosomes. tmRNA and SmpB together mimic tRNA shape, replacing the anticodon stem-loop with SmpB. tmRNA is encoded by the ssrA gene; the 2 termini fold to resemble tRNA(Ala) and it encodes a 'tag peptide', a short internal open reading frame. During trans-translation Ala-aminoacylated tmRNA acts like a tRNA, entering the A-site of stalled ribosomes, displacing the stalled mRNA. The ribosome then switches to translate the ORF on the tmRNA; the nascent peptide is terminated with the 'tag peptide' encoded by the tmRNA and targeted for degradation. The ribosome is freed to recommence translation, which seems to be the essential function of trans-translation. This Sinorhizobium medicae (strain WSM419) (Ensifer medicae) protein is SsrA-binding protein.